Here is a 130-residue protein sequence, read N- to C-terminus: Small ribosomal subunit protein uS11c (130 aa).

It belongs to the universal ribosomal protein uS11 family. Part of the 30S ribosomal subunit.

Its subcellular location is the plastid. The protein resides in the chloroplast. This is Small ribosomal subunit protein uS11c from Pyropia yezoensis (Susabi-nori).